Reading from the N-terminus, the 197-residue chain is GTP cyclohydrolase-2 (197 aa).

Residue 50–54 (RIHSE) participates in GTP binding. Residues cysteine 55, cysteine 66, and cysteine 68 each contribute to the Zn(2+) site. GTP contacts are provided by residues glutamine 71, 93–95 (EGR), and threonine 115. Residue aspartate 127 is the Proton acceptor of the active site. Residue arginine 129 is the Nucleophile of the active site. Threonine 150 and lysine 155 together coordinate GTP.

Belongs to the GTP cyclohydrolase II family. Zn(2+) serves as cofactor.

It catalyses the reaction GTP + 4 H2O = 2,5-diamino-6-hydroxy-4-(5-phosphoribosylamino)-pyrimidine + formate + 2 phosphate + 3 H(+). The protein operates within cofactor biosynthesis; riboflavin biosynthesis; 5-amino-6-(D-ribitylamino)uracil from GTP: step 1/4. Its function is as follows. Catalyzes the conversion of GTP to 2,5-diamino-6-ribosylamino-4(3H)-pyrimidinone 5'-phosphate (DARP), formate and pyrophosphate. In Neisseria gonorrhoeae (strain ATCC 700825 / FA 1090), this protein is GTP cyclohydrolase-2.